The sequence spans 341 residues: Ferrochelatase (341 aa).

Positions 210 and 291 each coordinate Fe cation.

It belongs to the ferrochelatase family.

The protein resides in the cytoplasm. The catalysed reaction is heme b + 2 H(+) = protoporphyrin IX + Fe(2+). It functions in the pathway porphyrin-containing compound metabolism; protoheme biosynthesis; protoheme from protoporphyrin-IX: step 1/1. Functionally, catalyzes the ferrous insertion into protoporphyrin IX. This Alcanivorax borkumensis (strain ATCC 700651 / DSM 11573 / NCIMB 13689 / SK2) protein is Ferrochelatase.